The chain runs to 439 residues: Ribosomal protein uS12 methylthiotransferase RimO (439 aa).

Residues 5 to 117 (KKLHLISLGC…IDELIASKQS (113 aa)) enclose the MTTase N-terminal domain. 6 residues coordinate [4Fe-4S] cluster: Cys-14, Cys-48, Cys-80, Cys-149, Cys-153, and Cys-156. The region spanning 135–363 (TGSNYHAYIK…GEIAERSTLR (229 aa)) is the Radical SAM core domain. The 72-residue stretch at 366-437 (EKMVGKTVEL…GMQLLATLIK (72 aa)) folds into the TRAM domain.

The protein belongs to the methylthiotransferase family. RimO subfamily. [4Fe-4S] cluster serves as cofactor.

It localises to the cytoplasm. It carries out the reaction L-aspartate(89)-[ribosomal protein uS12]-hydrogen + (sulfur carrier)-SH + AH2 + 2 S-adenosyl-L-methionine = 3-methylsulfanyl-L-aspartate(89)-[ribosomal protein uS12]-hydrogen + (sulfur carrier)-H + 5'-deoxyadenosine + L-methionine + A + S-adenosyl-L-homocysteine + 2 H(+). Functionally, catalyzes the methylthiolation of an aspartic acid residue of ribosomal protein uS12. The chain is Ribosomal protein uS12 methylthiotransferase RimO from Sulfurovum sp. (strain NBC37-1).